A 155-amino-acid polypeptide reads, in one-letter code: Small ribosomal subunit protein uS7 (155 aa).

Belongs to the universal ribosomal protein uS7 family. Part of the 30S ribosomal subunit. Contacts proteins S9 and S11.

Functionally, one of the primary rRNA binding proteins, it binds directly to 16S rRNA where it nucleates assembly of the head domain of the 30S subunit. Is located at the subunit interface close to the decoding center, probably blocks exit of the E-site tRNA. The chain is Small ribosomal subunit protein uS7 from Sulfurovum sp. (strain NBC37-1).